The following is a 304-amino-acid chain: Acetylglutamate kinase (304 aa).

Substrate is bound by residues 75 to 76, Arg97, and Asn202; that span reads GG.

This sequence belongs to the acetylglutamate kinase family. ArgB subfamily.

Its subcellular location is the cytoplasm. The enzyme catalyses N-acetyl-L-glutamate + ATP = N-acetyl-L-glutamyl 5-phosphate + ADP. It functions in the pathway amino-acid biosynthesis; L-arginine biosynthesis; N(2)-acetyl-L-ornithine from L-glutamate: step 2/4. Catalyzes the ATP-dependent phosphorylation of N-acetyl-L-glutamate. This Parvibaculum lavamentivorans (strain DS-1 / DSM 13023 / NCIMB 13966) protein is Acetylglutamate kinase.